The chain runs to 237 residues: 1-(5-phosphoribosyl)-5-[(5-phosphoribosylamino)methylideneamino] imidazole-4-carboxamide isomerase (237 aa).

Aspartate 8 acts as the Proton acceptor in catalysis. The active-site Proton donor is the aspartate 129.

It belongs to the HisA/HisF family.

Its subcellular location is the cytoplasm. The catalysed reaction is 1-(5-phospho-beta-D-ribosyl)-5-[(5-phospho-beta-D-ribosylamino)methylideneamino]imidazole-4-carboxamide = 5-[(5-phospho-1-deoxy-D-ribulos-1-ylimino)methylamino]-1-(5-phospho-beta-D-ribosyl)imidazole-4-carboxamide. The protein operates within amino-acid biosynthesis; L-histidine biosynthesis; L-histidine from 5-phospho-alpha-D-ribose 1-diphosphate: step 4/9. The chain is 1-(5-phosphoribosyl)-5-[(5-phosphoribosylamino)methylideneamino] imidazole-4-carboxamide isomerase from Roseiflexus sp. (strain RS-1).